Consider the following 458-residue polypeptide: UPF0210 protein MmarC6_1246 (458 aa).

This sequence belongs to the UPF0210 family.

The protein is UPF0210 protein MmarC6_1246 of Methanococcus maripaludis (strain C6 / ATCC BAA-1332).